The following is a 301-amino-acid chain: Diaminopimelate epimerase (301 aa).

N15, Q47, and N67 together coordinate substrate. The Proton donor role is filled by C76. Residues G77–N78, N163, N197, and E215–R216 each bind substrate. C224 (proton acceptor) is an active-site residue. G225 to S226 is a binding site for substrate.

It belongs to the diaminopimelate epimerase family. As to quaternary structure, homodimer.

The protein localises to the cytoplasm. The enzyme catalyses (2S,6S)-2,6-diaminopimelate = meso-2,6-diaminopimelate. The protein operates within amino-acid biosynthesis; L-lysine biosynthesis via DAP pathway; DL-2,6-diaminopimelate from LL-2,6-diaminopimelate: step 1/1. In terms of biological role, catalyzes the stereoinversion of LL-2,6-diaminopimelate (L,L-DAP) to meso-diaminopimelate (meso-DAP), a precursor of L-lysine and an essential component of the bacterial peptidoglycan. This chain is Diaminopimelate epimerase, found in Rhizobium rhizogenes (strain K84 / ATCC BAA-868) (Agrobacterium radiobacter).